Here is a 39-residue protein sequence, read N- to C-terminus: Photosystem II reaction center protein L (39 aa).

A helical transmembrane segment spans residues 18–38 (SLYLGLLVVFTTGILFSSYFF).

The protein belongs to the PsbL family. As to quaternary structure, PSII is composed of 1 copy each of membrane proteins PsbA, PsbB, PsbC, PsbD, PsbE, PsbF, PsbH, PsbI, PsbJ, PsbK, PsbL, PsbM, PsbT, PsbX, PsbY, PsbZ, Psb30/Ycf12, peripheral proteins PsbO, CyanoQ (PsbQ), PsbU, PsbV and a large number of cofactors. It forms dimeric complexes.

Its subcellular location is the cellular thylakoid membrane. Its function is as follows. One of the components of the core complex of photosystem II (PSII). PSII is a light-driven water:plastoquinone oxidoreductase that uses light energy to abstract electrons from H(2)O, generating O(2) and a proton gradient subsequently used for ATP formation. It consists of a core antenna complex that captures photons, and an electron transfer chain that converts photonic excitation into a charge separation. This subunit is found at the monomer-monomer interface and is required for correct PSII assembly and/or dimerization. This Synechococcus sp. (strain WH7803) protein is Photosystem II reaction center protein L.